The following is a 472-amino-acid chain: Na(+)/H(+) antiporter NhaA (472 aa).

11 consecutive transmembrane segments (helical) span residues 48 to 68 (AGGI…NSAW), 91 to 111 (MSLH…VVGL), 129 to 149 (ALPV…YFAV), 157 to 177 (AGWG…LVLL), 185 to 205 (LIIF…LVIA), 210 to 230 (HEIS…LLLL), 237 to 257 (HAIP…HSGV), 337 to 357 (GPWV…GIDF), 374 to 394 (VCLG…WIAV), 410 to 430 (LLGV…ISQL), and 443 to 463 (LGIL…LYFG).

Belongs to the NhaA Na(+)/H(+) (TC 2.A.33) antiporter family.

It localises to the cell inner membrane. The enzyme catalyses Na(+)(in) + 2 H(+)(out) = Na(+)(out) + 2 H(+)(in). In terms of biological role, na(+)/H(+) antiporter that extrudes sodium in exchange for external protons. This chain is Na(+)/H(+) antiporter NhaA, found in Syntrophobacter fumaroxidans (strain DSM 10017 / MPOB).